The following is a 248-amino-acid chain: 1-(5-phosphoribosyl)-5-[(5-phosphoribosylamino)methylideneamino] imidazole-4-carboxamide isomerase (248 aa).

Asp-8 serves as the catalytic Proton acceptor. The active-site Proton donor is Asp-129.

This sequence belongs to the HisA/HisF family.

It localises to the cytoplasm. It carries out the reaction 1-(5-phospho-beta-D-ribosyl)-5-[(5-phospho-beta-D-ribosylamino)methylideneamino]imidazole-4-carboxamide = 5-[(5-phospho-1-deoxy-D-ribulos-1-ylimino)methylamino]-1-(5-phospho-beta-D-ribosyl)imidazole-4-carboxamide. It participates in amino-acid biosynthesis; L-histidine biosynthesis; L-histidine from 5-phospho-alpha-D-ribose 1-diphosphate: step 4/9. This is 1-(5-phosphoribosyl)-5-[(5-phosphoribosylamino)methylideneamino] imidazole-4-carboxamide isomerase from Rhizobium leguminosarum bv. trifolii (strain WSM2304).